The chain runs to 105 residues: Putative zinc finger protein 861 (105 aa).

Residues Y75–H97 form a C2H2-type zinc finger.

The polypeptide is Putative zinc finger protein 861 (ZNF861P) (Homo sapiens (Human)).